A 425-amino-acid chain; its full sequence is MVMFSQDHVQIVYGSTRICKSLAPANKRKTHRTIVVAPRRGFLRIPPDGQDVNHVKIVPTTTSSSLAPPRDDERRPTPPLRPPLTVYPYGTSLIRRSARDAKLRSKLIVFHITRPALGQHPQNPGISGPAAMDHSEFLTSFRREVDRQTVLTAESAPATVEVCLGDALPGGVMGGGGLPAGVGSASAAVAAAAAAVAGVPVAANPVMPATATVTTPPMIDLTSHHRPLTLFTPASAAAAPAVATNGGNATYILPADCRYAPLFASKYKYVFEEVSRLMRLHDSTAVQLQISASCGNAFQALKSALLKLHNVTVLAGQQLITQTMPHTPQAVATFKFFHQDPNRVLDCIRPVVPRSTSYHETGVYQMWVSGATKKDLFDAVTLCASIVEKQPDVFNINVSLLTYPSIAAPHLPLYNEFTSFRLPTS.

The interval 59–83 (PTTTSSSLAPPRDDERRPTPPLRPP) is disordered.

Belongs to the herpesviridae U84 family.

The protein resides in the host nucleus. Plays a role in the inhibition of host DNA replication in the infected cell. Targets the mini-chromosome maintenance (MCM) complex and blocks the accumulation of MCM proteins and their loading onto host chromatin. This is Protein UL117 (UL117) from Homo sapiens (Human).